Here is a 298-residue protein sequence, read N- to C-terminus: Tyrosine recombinase XerC (298 aa).

The 87-residue stretch at 2-88 (TDLHTDVERY…ALRSFFDWLV (87 aa)) folds into the Core-binding (CB) domain. Residues 109–288 (HLPKNIDVDD…DFQHLASVYD (180 aa)) enclose the Tyr recombinase domain. Catalysis depends on residues Arg-148, Lys-172, His-240, Arg-243, and His-266. Tyr-275 (O-(3'-phospho-DNA)-tyrosine intermediate) is an active-site residue.

Belongs to the 'phage' integrase family. XerC subfamily. As to quaternary structure, forms a cyclic heterotetrameric complex composed of two molecules of XerC and two molecules of XerD, in which XerC interacts with XerD via its C-terminal region, XerD interacts with XerC via its C-terminal region and so on.

Its subcellular location is the cytoplasm. FtsK may regulate the catalytic switch between XerC and XerD in the heterotetrameric complex during the two steps of the recombination process. Functionally, site-specific tyrosine recombinase, which acts by catalyzing the cutting and rejoining of the recombining DNA molecules. Binds cooperatively to specific DNA consensus sequences that are separated from XerD binding sites by a short central region, forming the heterotetrameric XerC-XerD complex that recombines DNA substrates. The complex is essential to convert dimers of the bacterial chromosome into monomers to permit their segregation at cell division. It also contributes to the segregational stability of plasmids. In the complex XerC specifically exchanges the top DNA strands. The chain is Tyrosine recombinase XerC from Shigella flexneri serotype 5b (strain 8401).